Here is an 822-residue protein sequence, read N- to C-terminus: Phenylalanine--tRNA ligase beta subunit (822 aa).

Residues 44 to 162 form the tRNA-binding domain; the sequence is LSKNTNLVVG…DQIALGSNAL (119 aa). The segment at 201-224 is disordered; it reads QSSNNNQETKSTNYKTKNSEDQTN. One can recognise a B5 domain in the interval 430–513; sequence RTNPTISLNL…RLYGCHKLPP (84 aa). The Mg(2+) site is built by D491, D497, and D501. Positions 730–822 constitute an FDX-ACB domain; the sequence is PKFPTVIRDL…LIKHFHIEIR (93 aa).

It belongs to the phenylalanyl-tRNA synthetase beta subunit family. Type 1 subfamily. As to quaternary structure, tetramer of two alpha and two beta subunits. Mg(2+) is required as a cofactor.

The protein localises to the cytoplasm. It carries out the reaction tRNA(Phe) + L-phenylalanine + ATP = L-phenylalanyl-tRNA(Phe) + AMP + diphosphate + H(+). The protein is Phenylalanine--tRNA ligase beta subunit of Onion yellows phytoplasma (strain OY-M).